A 103-amino-acid polypeptide reads, in one-letter code: Large ribosomal subunit protein bL21 (103 aa).

The protein belongs to the bacterial ribosomal protein bL21 family. Part of the 50S ribosomal subunit. Contacts protein L20.

Functionally, this protein binds to 23S rRNA in the presence of protein L20. The polypeptide is Large ribosomal subunit protein bL21 (Borrelia garinii subsp. bavariensis (strain ATCC BAA-2496 / DSM 23469 / PBi) (Borreliella bavariensis)).